A 404-amino-acid polypeptide reads, in one-letter code: Tryptophan synthase beta chain (404 aa).

Lys-95 bears the N6-(pyridoxal phosphate)lysine mark.

Belongs to the TrpB family. In terms of assembly, tetramer of two alpha and two beta chains. Pyridoxal 5'-phosphate serves as cofactor.

The enzyme catalyses (1S,2R)-1-C-(indol-3-yl)glycerol 3-phosphate + L-serine = D-glyceraldehyde 3-phosphate + L-tryptophan + H2O. It functions in the pathway amino-acid biosynthesis; L-tryptophan biosynthesis; L-tryptophan from chorismate: step 5/5. In terms of biological role, the beta subunit is responsible for the synthesis of L-tryptophan from indole and L-serine. This chain is Tryptophan synthase beta chain (trpB), found in Thermus thermophilus (strain ATCC BAA-163 / DSM 7039 / HB27).